A 155-amino-acid polypeptide reads, in one-letter code: MPERTQAPVTLDIHQILSILPHRYPLVMVDRVTEITANKCIRGYKCVAYNEPWFQGHFPQRPIMPGVLILESLTQLGGILAYASDPFDATSNLMFFLGIDKAKFRHTVTPGDRLDLYAEVLHHRSNVWKLRGEASVDGTLCAEGEMLASIVDREP.

The active site involves His-57.

It belongs to the thioester dehydratase family. FabZ subfamily.

It is found in the cytoplasm. It carries out the reaction a (3R)-hydroxyacyl-[ACP] = a (2E)-enoyl-[ACP] + H2O. Functionally, involved in unsaturated fatty acids biosynthesis. Catalyzes the dehydration of short chain beta-hydroxyacyl-ACPs and long chain saturated and unsaturated beta-hydroxyacyl-ACPs. This Sorangium cellulosum (strain So ce56) (Polyangium cellulosum (strain So ce56)) protein is 3-hydroxyacyl-[acyl-carrier-protein] dehydratase FabZ.